The sequence spans 97 residues: Aspartyl/glutamyl-tRNA(Asn/Gln) amidotransferase subunit C (97 aa).

It belongs to the GatC family. In terms of assembly, heterotrimer of A, B and C subunits.

The enzyme catalyses L-glutamyl-tRNA(Gln) + L-glutamine + ATP + H2O = L-glutaminyl-tRNA(Gln) + L-glutamate + ADP + phosphate + H(+). It carries out the reaction L-aspartyl-tRNA(Asn) + L-glutamine + ATP + H2O = L-asparaginyl-tRNA(Asn) + L-glutamate + ADP + phosphate + 2 H(+). Its function is as follows. Allows the formation of correctly charged Asn-tRNA(Asn) or Gln-tRNA(Gln) through the transamidation of misacylated Asp-tRNA(Asn) or Glu-tRNA(Gln) in organisms which lack either or both of asparaginyl-tRNA or glutaminyl-tRNA synthetases. The reaction takes place in the presence of glutamine and ATP through an activated phospho-Asp-tRNA(Asn) or phospho-Glu-tRNA(Gln). This chain is Aspartyl/glutamyl-tRNA(Asn/Gln) amidotransferase subunit C, found in Prochlorococcus marinus (strain MIT 9515).